The following is a 419-amino-acid chain: Tyrosine--tRNA ligase (419 aa).

Residue Y42 participates in L-tyrosine binding. The short motif at 47–56 is the 'HIGH' region element; it reads CTAPSLHVGS. 2 residues coordinate L-tyrosine: Y179 and Q183. Residues 239–243 carry the 'KMSKS' region motif; the sequence is KMGKT. ATP is bound at residue K242. Positions 353-419 constitute an S4 RNA-binding domain; the sequence is LGVLAAFVKA…RKRHVLLKLV (67 aa).

This sequence belongs to the class-I aminoacyl-tRNA synthetase family. TyrS type 1 subfamily. As to quaternary structure, homodimer.

The protein localises to the cytoplasm. The catalysed reaction is tRNA(Tyr) + L-tyrosine + ATP = L-tyrosyl-tRNA(Tyr) + AMP + diphosphate + H(+). Catalyzes the attachment of tyrosine to tRNA(Tyr) in a two-step reaction: tyrosine is first activated by ATP to form Tyr-AMP and then transferred to the acceptor end of tRNA(Tyr). This is Tyrosine--tRNA ligase from Methylocella silvestris (strain DSM 15510 / CIP 108128 / LMG 27833 / NCIMB 13906 / BL2).